The chain runs to 579 residues: Deleted in azoospermia protein 4 (579 aa).

A compositionally biased stretch (polar residues) spans 1-10; that stretch reads MSAANPETPN. Residues 1-27 form a disordered region; that stretch reads MSAANPETPNSTISREASTQSSSAAAS. Residues 11–27 are compositionally biased toward low complexity; the sequence is STISREASTQSSSAAAS. One can recognise an RRM 1 domain in the interval 40–115; sequence NTVFVGGIDA…KKLKLGPAIR (76 aa). The segment covering 163–175 has biased composition (polar residues); it reads QHVQSAANPETPN. The tract at residues 163-192 is disordered; sequence QHVQSAANPETPNSTISREASTQSSSAAAS. Positions 176-192 are enriched in low complexity; sequence STISREASTQSSSAAAS. In terms of domain architecture, RRM 2 spans 205–280; sequence NTVFVGGIDA…KKLKLGPAIR (76 aa). DAZ domains are found at residues 332–355, 356–379, 380–403, 404–427, 428–451, 452–475, 476–499, 500–523, and 524–547; these read AYSA…YNYQ, EYPT…YNYQ, PFPA…YNYQ, and AFPA…YNYQ.

This sequence belongs to the RRM DAZ family. As to quaternary structure, forms a heterodimer with BOLL and DAZL. Interacts with PUM2, DAZAP1, DAZAP2, DZIP1 and DZIP3. Testis-specific. Expression restricted to premeiotic germ cells, particularly in spermatogonia (at protein level).

It localises to the cytoplasm. The protein resides in the nucleus. Functionally, RNA-binding protein that plays an essential role in spermatogenesis. May act by binding to the 3'-UTR of mRNAs and regulating their translation. The polypeptide is Deleted in azoospermia protein 4 (DAZ4) (Homo sapiens (Human)).